A 129-amino-acid chain; its full sequence is uncharacterized protein (129 aa).

The first 27 residues, 1 to 27 (MLMRKKKLLSRISFGSLFLLCGTILSA), serve as a signal peptide directing secretion. C28 carries N-palmitoyl cysteine lipidation. C28 carries the S-diacylglycerol cysteine lipid modification.

This sequence belongs to the MG439/MG440 family.

It localises to the cell membrane. This is an uncharacterized protein from Mycoplasma pneumoniae (strain ATCC 29342 / M129 / Subtype 1) (Mycoplasmoides pneumoniae).